Consider the following 392-residue polypeptide: Esterase EstB (392 aa).

Ser75 (acyl-ester intermediate) is an active-site residue.

It belongs to the class-A beta-lactamase family.

It is found in the cytoplasm. Its activity is regulated as follows. Strongly inhibited by eserin, NaF, HgCl2, SDS and Triton X-100. In terms of biological role, acts on short-chain (C4-C6) fatty acid esters and triglycerides, including tertiary alcohol esters. Activity on p-nitrophenyl esters is generally higher than on o-nitrophenyl esters. Lacks beta-lactamase activity; it hydrolyzes the ester bond of cephalosporin substrates but there is no opening of the beta-lactam ring observed. This is Esterase EstB (estB) from Burkholderia gladioli (Pseudomonas marginata).